The chain runs to 395 residues: Acetylornithine aminotransferase (395 aa).

Residues Gly-117–Ala-118 and Phe-144 contribute to the pyridoxal 5'-phosphate site. Arg-147 is a N(2)-acetyl-L-ornithine binding site. Pyridoxal 5'-phosphate is bound at residue Asp-230–Gln-233. Lys-259 is modified (N6-(pyridoxal phosphate)lysine). Ser-285 contributes to the N(2)-acetyl-L-ornithine binding site. Thr-286 is a binding site for pyridoxal 5'-phosphate.

It belongs to the class-III pyridoxal-phosphate-dependent aminotransferase family. ArgD subfamily. In terms of assembly, homodimer. The cofactor is pyridoxal 5'-phosphate.

It is found in the cytoplasm. It catalyses the reaction N(2)-acetyl-L-ornithine + 2-oxoglutarate = N-acetyl-L-glutamate 5-semialdehyde + L-glutamate. It functions in the pathway amino-acid biosynthesis; L-arginine biosynthesis; N(2)-acetyl-L-ornithine from L-glutamate: step 4/4. This Methanosarcina acetivorans (strain ATCC 35395 / DSM 2834 / JCM 12185 / C2A) protein is Acetylornithine aminotransferase.